Consider the following 2769-residue polypeptide: Teneurin-4 (2769 aa).

The segment covering 1–22 (MDVKERKPYRSLTRRRDAERRY) has biased composition (basic and acidic residues). The interval 1-45 (MDVKERKPYRSLTRRRDAERRYTSSSADSEEGKAPQKSYSSSETL) is disordered. Residues 1–341 (MDVKERKPYR…KPSKYCNWKC (341 aa)) enclose the Teneurin N-terminal domain. The Cytoplasmic portion of the chain corresponds to 1-345 (MDVKERKPYR…YCNWKCAALS (345 aa)). Ser124 is modified (phosphoserine). Residues 130–233 (RLWGRSTRSG…PPAGGAQEPA (104 aa)) form a disordered region. Positions 134–155 (RSTRSGRSSCLSSRANSNLTLT) are enriched in low complexity. Over residues 156–166 (DTEHENTETDH) the composition is skewed to basic and acidic residues. Residue Thr178 is modified to Phosphothreonine. Positions 187–211 (HTPNQHHAASINSLNRGNFTPRSNP) are enriched in polar residues. A helical membrane pass occupies residues 346-366 (AIVISATLVILLAYFVAMHLF). At 367-2769 (GLNWHLQPME…FMRQSEMGRR (2403 aa)) the chain is on the extracellular side. The interval 400-426 (PSGGTGLETPDRKGKGTTEGKPSSFFP) is disordered. Positions 408–417 (TPDRKGKGTT) are enriched in basic and acidic residues. N-linked (GlcNAc...) asparagine glycosylation is present at Asn467. A disordered region spans residues 507–526 (ARSLEGTPRQSRGTVPPSSH). The span at 514–526 (PRQSRGTVPPSSH) shows a compositional bias: polar residues. EGF-like domains lie at 562 to 593 (SVDNCPSNCYGNGDCISGTCHCFLGFLGPDCG), 594 to 624 (RASCPVLCSGNGQYMKGRCLCHSGWKGAECD), 626 to 658 (PTNQCIDVACSNHGTCITGTCICNPGYKGESCE), 659 to 690 (EVDCMDPTCSGRGVCVRGECHCSVGWGGTNCE), 692 to 725 (PRATCLDQCSGHGTFLPDTGLCSCDPSWTGHDCS), 726 to 757 (IEICAADCGGHGVCVGGTCRCEDGWMGAACDQ), 758 to 787 (RACHPRCAEHGTCRDGKCECSPGWNGEHCT), and 788 to 831 (IAHY…AGCD). 22 disulfides stabilise this stretch: Cys566–Cys576, Cys570–Cys581, Cys583–Cys592, Cys601–Cys612, Cys614–Cys623, Cys630–Cys641, Cys635–Cys646, Cys648–Cys657, Cys662–Cys673, Cys667–Cys678, Cys680–Cys689, Cys700–Cys713, Cys715–Cys724, Cys729–Cys739, Cys733–Cys744, Cys746–Cys755, Cys760–Cys770, Cys764–Cys775, Cys777–Cys786, Cys800–Cys810, Cys804–Cys819, and Cys821–Cys830. Residues Asn940 and Asn1259 are each glycosylated (N-linked (GlcNAc...) asparagine). 5 NHL repeats span residues 1216–1259 (SCPS…PSGN), 1264–1308 (LELR…IKST), 1334–1378 (TRCG…NGII), 1393–1444 (LSCD…VAGR), and 1523–1566 (CFSG…IRKN). The YD 1 repeat unit spans residues 1576 to 1595 (YELSSPIDQELYLFDTTGKH). Residue Asn1609 is glycosylated (N-linked (GlcNAc...) asparagine). YD repeat units lie at residues 1612-1632 (YTGDGDITLITDNNGNMVNVR), 1675-1694 (YHGNSGLLATKSNENGWTTF), and 1695-1717 (YEYDSFGRLTNVTFPTGQVSSFR). Residues Asn1705, Asn1741, Asn1799, and Asn1884 are each glycosylated (N-linked (GlcNAc...) asparagine). YD repeat units lie at residues 1887–1906 (YSPGGYIAGIQRGIMSERME), 1928–1946 (YLEKSMVLLLHSQRQYIFE), 1947–1967 (FDKNDRLSSVTMPNVARQTLE), 1974–1991 (YYRNIYQPPEGNASVIQD), 1992–2013 (FTEDGHLLHTFYLGTGRRVIYK), 2014–2031 (YGKLSKLAETLYDTTKVS), 2034–2054 (YDETAGMLKTINLQNEGFTCT), 2057–2077 (YRQIGPLIDRQIFRFTEEGMV), 2085–2104 (YDNSFRVTSMQAVINETPLP), 2110–2127 (YDDVSGKTEQFGKFGVIY), 2128–2154 (YDINQIITTAVMTHTKHFDAYGRMKEV), 2156–2169 (YEIFRSLMYWMTVQ), 2170–2193 (YDNMGRVVKKELKVGPYANTTRYS), 2196–2216 (YDADGQLQTVSINDKPLWRYS), 2217–2237 (YDLNGNLHLLSPGNSARLTPL), 2239–2259 (YDIRDRITRLGDVQYKMDEDG), 2271–2291 (YNSAGLLIKAYNRAGSWSVRY), and 2293–2313 (YDGLGRRVSSKSSHSHHLQFF). Asn1985 carries N-linked (GlcNAc...) asparagine glycosylation. Asn2188 is a glycosylation site (N-linked (GlcNAc...) asparagine). An N-linked (GlcNAc...) asparagine glycan is attached at Asn2328. The YD 23 repeat unit spans residues 2339 to 2380 (YDLQGHLFAMELSSGDEFYIACDNIGTPLAVFSGTGLMIKQI). Residue Asn2646 is glycosylated (N-linked (GlcNAc...) asparagine).

The protein belongs to the tenascin family. Teneurin subfamily. Homodimer; disulfide-linked. May also form heterodimer with either TENM1 or TENM2 or TENM3.

It is found in the cell membrane. The protein resides in the cell projection. It localises to the nucleus. The protein localises to the cytoplasm. Functionally, involved in neural development, regulating the establishment of proper connectivity within the nervous system. Plays a role in the establishment of the anterior-posterior axis during gastrulation. Regulates the differentiation and cellular process formation of oligodendrocytes and myelination of small-diameter axons in the central nervous system (CNS). Promotes activation of focal adhesion kinase. May function as a cellular signal transducer. This is Teneurin-4 (TENM4) from Homo sapiens (Human).